We begin with the raw amino-acid sequence, 671 residues long: MTDRRRSMSCVHFFPLKSRGFLPTLTSKKRSVKLSKQDATVTVVILLLILLLGWGYSRALRLSQGKGNPIGRVFFYKKTATRKKNNQALWLKLKDGVPVYHRDVLRTTTGSEAVIVFTDNSRLDIAENTMVRISHTGMKKKDVRLVTGAIRYARAAGNPAAHTVHVGKTTISLSGDGQVNVRGGERDSTVEIARGEALLHDAQGQTLPLQTFTQLATSREDGTVRILHPTFVPLLPDQDALLLTAEHTRSVGFVWLGDATTVQPSVRLQISRYADFSVIETERKLTLPHEANASRTTFKTSERLGEGRWFWRLVPQNGTASAPRSFSVRRARKVMLHTPRAQAVLSYRDAIPPTLFSWTSVEDVEQYRLLLSSRADFSADVKTFSLRTPEISVPGLGEGTYFWKVVPRFDEGIEDPVFASEVGTFSIKQGKELHAPVALFPAEDEVLEHADRENRMVIFTCEPIPEARRYVWTVKNMDANASPLVTTTSVPFLTVPMRSLRARLQEGTYQWQVAWETRRSDRSPYSALRAFTVIEGMHAWEEEPETRDLIALRAPSFVLRDMPALITEKYLLQHRALRCKWTAVHNAQRYTVTLKNKKTDAVLQTATTTGVEFSFTNLAHLEEGSFHWVIQAHTEQEGYEPASAQVVRAFTIRVSELERPRAKEIVHYEYH.

The helical transmembrane segment at 39–56 (ATVTVVILLLILLLGWGY) threads the bilayer.

It localises to the membrane. This is an uncharacterized protein from Treponema pallidum (strain Nichols).